Here is a 380-residue protein sequence, read N- to C-terminus: Cytochrome b (380 aa).

Transmembrane regions (helical) follow at residues 34–54 (FGSL…LLAM), 78–99 (WLIR…YFHI), 114–134 (WNTG…GYVL), and 179–199 (FFAL…IHLT). The heme b site is built by His-84 and His-98. Positions 183 and 197 each coordinate heme b. Position 202 (His-202) interacts with a ubiquinone. A run of 4 helical transmembrane segments spans residues 227–247 (LKDI…ALFS), 289–309 (LGGV…PFLH), 321–341 (ISQL…WVGS), and 348–368 (FIII…VLFP).

It belongs to the cytochrome b family. As to quaternary structure, the cytochrome bc1 complex contains 11 subunits: 3 respiratory subunits (MT-CYB, CYC1 and UQCRFS1), 2 core proteins (UQCRC1 and UQCRC2) and 6 low-molecular weight proteins (UQCRH/QCR6, UQCRB/QCR7, UQCRQ/QCR8, UQCR10/QCR9, UQCR11/QCR10 and a cleavage product of UQCRFS1). This cytochrome bc1 complex then forms a dimer. Heme b is required as a cofactor.

The protein localises to the mitochondrion inner membrane. Component of the ubiquinol-cytochrome c reductase complex (complex III or cytochrome b-c1 complex) that is part of the mitochondrial respiratory chain. The b-c1 complex mediates electron transfer from ubiquinol to cytochrome c. Contributes to the generation of a proton gradient across the mitochondrial membrane that is then used for ATP synthesis. The sequence is that of Cytochrome b (MT-CYB) from Pachyptila turtur (Fairy prion).